We begin with the raw amino-acid sequence, 413 residues long: 3-oxo-tetronate kinase (413 aa).

ATP is bound by residues serine 254, 354–357 (GGET), and glycine 397.

It belongs to the four-carbon acid sugar kinase family.

The enzyme catalyses 3-dehydro-L-erythronate + ATP = 3-dehydro-4-O-phospho-L-erythronate + ADP + H(+). It carries out the reaction 3-dehydro-D-erythronate + ATP = 3-dehydro-4-O-phospho-D-erythronate + ADP + H(+). Catalyzes the ATP-dependent phosphorylation of 3-oxo-tetronate to 3-oxo-tetronate 4-phosphate. The chain is 3-oxo-tetronate kinase from Haemophilus influenzae (strain ATCC 51907 / DSM 11121 / KW20 / Rd).